Here is a 640-residue protein sequence, read N- to C-terminus: MQTAENIEHLNFQAEANQLLKLMIHSLYSNKEIFLRELISNASDAADKLRFEGLSDAALYESDPDLKIRIAYDKEARTITIIDNGIGMSRQEVINNIGTIAKSGTREFFDSLTGDQAKDANLIGQFGVGFYSAFIVADKVTLTTRRAGLTIEHGVRWESGGEGEYTLETVEKPDRGTEIVLHLREGEDELLSSFQLRSIIRKYSDHITLPIVMKKEVWDDESKSYRLSDEDETINQASAIWARPKNEITQEQYDEFYKHVAHDFEPPLAHVHARVEGKQEYIQLLYIPAHAPFDLFDREHRHGLKLYVRRVFIMDDAEKLLPGYLRFVRGIIDSSDLPLNVSREILQESKDIDSIRAGSVKKVLGLIEDLAMSDKSEDQEKFKTFWREFGQVLKEGIAEDYSNRERIAKLLRFTSTHDEREEQTVSLDDYIARMKPEQEKIYYITADGLKAAQSSPHLEIFRKKGIEVLLLCDRIDEWLVANLNEYTGKSLQSIAKGNLDLGKLEDEEEKKEHEKEAGDFQELTNKMKEVLGEQVKDVRITYRLTESPACLVADTHDVSGNLGRLLKSAGQKVPDSKPFLEINPHHPMIQRLKYEEAKFADWSHILFDQALLAEGGQLEDPAGFVKRLNDLLLQNILSGK.

An a; substrate-binding region spans residues 1–343; it reads MQTAENIEHL…SSDLPLNVSR (343 aa). A b region spans residues 344–564; sequence EILQESKDID…THDVSGNLGR (221 aa). Residues 565–640 are c; the sequence is LLKSAGQKVP…LLLQNILSGK (76 aa).

Belongs to the heat shock protein 90 family. In terms of assembly, homodimer.

Its subcellular location is the cytoplasm. Molecular chaperone. Has ATPase activity. This is Chaperone protein HtpG from Nitrosomonas europaea (strain ATCC 19718 / CIP 103999 / KCTC 2705 / NBRC 14298).